The sequence spans 801 residues: Elongation factor G, mitochondrial (801 aa).

The transit peptide at 1–65 directs the protein to the mitochondrion; it reads MRVQSLLRAQ…QKIQNQRRWQ (65 aa). Positions 100 to 387 constitute a tr-type G domain; it reads SRVRNIGIAA…AVCDYLPNPS (288 aa). GTP is bound by residues 109–116, 185–189, and 239–242; these read AHIDSGKT, DTPGH, and NKMD.

This sequence belongs to the TRAFAC class translation factor GTPase superfamily. Classic translation factor GTPase family. EF-G/EF-2 subfamily.

The protein localises to the mitochondrion. Its pathway is protein biosynthesis; polypeptide chain elongation. Mitochondrial GTPase that catalyzes the GTP-dependent ribosomal translocation step during translation elongation. During this step, the ribosome changes from the pre-translocational (PRE) to the post-translocational (POST) state as the newly formed A-site-bound peptidyl-tRNA and P-site-bound deacylated tRNA move to the P and E sites, respectively. Catalyzes the coordinated movement of the two tRNA molecules, the mRNA and conformational changes in the ribosome. The polypeptide is Elongation factor G, mitochondrial (mef1) (Pyrenophora tritici-repentis (strain Pt-1C-BFP) (Wheat tan spot fungus)).